The sequence spans 431 residues: Histidinol dehydrogenase (431 aa).

Residues tyrosine 127, glutamine 185, and asparagine 208 each contribute to the NAD(+) site. Residues serine 234, glutamine 256, and histidine 259 each coordinate substrate. Zn(2+) contacts are provided by glutamine 256 and histidine 259. Residues glutamate 323 and histidine 324 each act as proton acceptor in the active site. Histidine 324, aspartate 357, glutamate 411, and histidine 416 together coordinate substrate. Aspartate 357 contacts Zn(2+). Histidine 416 is a binding site for Zn(2+).

Belongs to the histidinol dehydrogenase family. Requires Zn(2+) as cofactor.

The enzyme catalyses L-histidinol + 2 NAD(+) + H2O = L-histidine + 2 NADH + 3 H(+). It functions in the pathway amino-acid biosynthesis; L-histidine biosynthesis; L-histidine from 5-phospho-alpha-D-ribose 1-diphosphate: step 9/9. Catalyzes the sequential NAD-dependent oxidations of L-histidinol to L-histidinaldehyde and then to L-histidine. This is Histidinol dehydrogenase from Vibrio parahaemolyticus serotype O3:K6 (strain RIMD 2210633).